Consider the following 29-residue polypeptide: GLPVCGETCVGGTCNTPGCTCSWPVCTRD.

Residues 1 to 29 (GLPVCGETCVGGTCNTPGCTCSWPVCTRD) constitute a cross-link (cyclopeptide (Gly-Asp)). Cystine bridges form between Cys-5-Cys-19, Cys-9-Cys-21, and Cys-14-Cys-26.

In terms of processing, this is a cyclic peptide.

In terms of biological role, probably participates in a plant defense mechanism. In Oldenlandia affinis, this protein is Kalata-B4.